The sequence spans 456 residues: Mitochondrial import inner membrane translocase subunit TIM50 (456 aa).

The N-terminal 22 residues, 1–22, are a transit peptide targeting the mitochondrion; sequence MSLSKLSQKCFSRHHARTFIRF. Topologically, residues 23–171 are mitochondrial matrix; that stretch reads SSSDFQSLLG…RRKRMERNTR (149 aa). Disordered regions lie at residues 101-120 and 132-165; these read ETEKVASSPAPATPPSAIDE and EEAAASKTSAPSGSSGDNNDQPGNAEEVEARRKR. The segment covering 137-153 has biased composition (polar residues); sequence SKTSAPSGSSGDNNDQP. The helical transmembrane segment at 172-192 threads the bilayer; that stretch reads IGGYVLLGGSVIGFISFCFYY. At 193–456 the chain is on the mitochondrial intermembrane side; the sequence is GRAQRDEAGN…LFGFRRHASA (264 aa). The FCP1 homology domain occupies 247–391; the sequence is YLQPKYTIVI…VDLAELLKTI (145 aa).

Belongs to the TIM50 family. In terms of assembly, component of the TIM23 complex at least composed of tim-23, tim-17 and tim-50.

The protein localises to the mitochondrion inner membrane. Functionally, essential component of the TIM23 complex, a complex that mediates the translocation of transit peptide-containing proteins across the mitochondrial inner membrane. This is Mitochondrial import inner membrane translocase subunit TIM50 (scpl-4) from Caenorhabditis briggsae.